The chain runs to 827 residues: Disintegrin and metalloproteinase domain-containing protein 17 (827 aa).

Positions 1–17 are cleaved as a signal peptide; it reads MRQRLLFLTTLVPFVLA. The propeptide occupies 18 to 214; that stretch reads PRPPEEPGSG…SEEFVRRVKR (197 aa). N-linked (GlcNAc...) asparagine glycosylation is present at Asn-157. A Cysteine switch motif is present at residues 182 to 189; it reads KVCGYLNA. Cys-184 serves as a coordination point for Zn(2+). Over 215–671 the chain is Extracellular; that stretch reads RAEPNPLKNT…NTFGKFLADN (457 aa). Positions 223–474 constitute a Peptidase M12B domain; it reads NTCKLLVVAD…KAQECFQERS (252 aa). 3 cysteine pairs are disulfide-bonded: Cys-225/Cys-333, Cys-365/Cys-469, and Cys-423/Cys-453. N-linked (GlcNAc...) asparagine glycosylation is present at Asn-264. A Zn(2+)-binding site is contributed by His-405. Glu-406 is an active-site residue. His-409 and His-415 together coordinate Zn(2+). N-linked (GlcNAc...) asparagine glycosylation is found at Asn-452, Asn-498, Asn-539, and Asn-551. Residues 475–563 enclose the Disintegrin domain; sequence NKVCGNSRVD…ECPPPGDAED (89 aa). 4 disulfides stabilise this stretch: Cys-534–Cys-555, Cys-573–Cys-582, Cys-578–Cys-591, and Cys-593–Cys-600. The crambin-like stretch occupies residues 603–671; the sequence is CCRNLSGPCV…NTFGKFLADN (69 aa). An N-linked (GlcNAc...) asparagine glycan is attached at Asn-606. A helical membrane pass occupies residues 672–692; that stretch reads IVGSVLVFSLIFWIPFSILVH. The Cytoplasmic portion of the chain corresponds to 693–827; it reads CVDKKLDKQY…SRVDSKETEC (135 aa). The short motif at 731 to 738 is the SH3-binding element; sequence PAPQTPGR. Phosphothreonine; by MAPK14 is present on Thr-735. Thr-764 carries the post-translational modification Phosphothreonine. The segment at 766-827 is disordered; that stretch reads QEDPSTDSHV…SRVDSKETEC (62 aa). A Phosphoserine modification is found at Ser-770. Composition is skewed to basic and acidic residues over residues 771 to 784, 794 to 810, and 818 to 827; these read TDSHVDDDGFEKDP, SFEDLTDHPVTRSEKAA, and SRVDSKETEC. Ser-794 and Ser-822 each carry phosphoserine.

As to quaternary structure, interacts with MAD2L1, MAPK14 and MUC1. Interacts with iRhom1/RHBDF1 and iRhom2/RHBDF2. Interacts with FRMD8 via its interaction with iRhom1/RHBDF1 and iRhom2/RHBDF2. Interacts with TSPAN8. The cofactor is Zn(2+). The precursor is cleaved by a furin endopeptidase. Post-translationally, phosphorylated. Stimulation by growth factor or phorbol 12-myristate 13-acetate induces phosphorylation of Ser-822 but decreases phosphorylation of Ser-794. Phosphorylation at Thr-735 by MAPK14 is required for ADAM17-mediated ectodomain shedding.

The protein resides in the membrane. The enzyme catalyses Narrow endopeptidase specificity. Cleaves Pro-Leu-Ala-Gln-Ala-|-Val-Arg-Ser-Ser-Ser in the membrane-bound, 26-kDa form of tumor necrosis factor alpha (TNFalpha). Similarly cleaves other membrane-anchored, cell-surface proteins to 'shed' the extracellular domains.. Transmembrane metalloprotease which mediates the ectodomain shedding of a myriad of transmembrane proteins including adhesion proteins, growth factor precursors and cytokines important for inflammation and immunity. Cleaves the membrane-bound precursor of TNF-alpha to its mature soluble form. Responsible for the proteolytical release of soluble JAM3 from endothelial cells surface. Responsible for the proteolytic release of several other cell-surface proteins, including p75 TNF-receptor, interleukin 1 receptor type II, p55 TNF-receptor, transforming growth factor-alpha, L-selectin, growth hormone receptor, MUC1 and the amyloid precursor protein. Acts as an activator of Notch pathway by mediating cleavage of Notch, generating the membrane-associated intermediate fragment called Notch extracellular truncation (NEXT). Plays a role in the proteolytic processing of ACE2. Plays a role in hemostasis through shedding of GP1BA, the platelet glycoprotein Ib alpha chain. Mediates the proteolytic cleavage of LAG3, leading to release the secreted form of LAG3. Mediates the proteolytic cleavage of IL6R, leading to the release of secreted form of IL6R. Mediates the proteolytic cleavage and shedding of FCGR3A upon NK cell stimulation, a mechanism that allows for increased NK cell motility and detachment from opsonized target cells. Cleaves TREM2, resulting in shedding of the TREM2 ectodomain. This is Disintegrin and metalloproteinase domain-containing protein 17 (Adam17) from Rattus norvegicus (Rat).